A 268-amino-acid chain; its full sequence is GTP cyclohydrolase FolE2 (268 aa).

It belongs to the GTP cyclohydrolase IV family.

It catalyses the reaction GTP + H2O = 7,8-dihydroneopterin 3'-triphosphate + formate + H(+). Its pathway is cofactor biosynthesis; 7,8-dihydroneopterin triphosphate biosynthesis; 7,8-dihydroneopterin triphosphate from GTP: step 1/1. Its function is as follows. Converts GTP to 7,8-dihydroneopterin triphosphate. The protein is GTP cyclohydrolase FolE2 of Ralstonia nicotianae (strain ATCC BAA-1114 / GMI1000) (Ralstonia solanacearum).